The sequence spans 277 residues: Proteasome subunit beta type-7 (277 aa).

Residues 1–43 (MAAVSVFQAPVGGFSFDNCRRNAVLEADFAKKGFKLPKARKTG) constitute a propeptide, removed in mature form. Catalysis depends on T44, which acts as the Nucleophile.

The protein belongs to the peptidase T1B family. As to quaternary structure, the 26S proteasome consists of a 20S proteasome core and two 19S regulatory subunits. The 20S proteasome core is a barrel-shaped complex made of 28 subunits that are arranged in four stacked rings. The two outer rings are each formed by seven alpha subunits, and the two inner rings are formed by seven beta subunits. The proteolytic activity is exerted by three beta-subunits PSMB5, PSMB6 and PSMB7.

It localises to the cytoplasm. The protein localises to the nucleus. It carries out the reaction Cleavage of peptide bonds with very broad specificity.. Its function is as follows. Component of the 20S core proteasome complex involved in the proteolytic degradation of most intracellular proteins. This complex plays numerous essential roles within the cell by associating with different regulatory particles. Associated with two 19S regulatory particles, forms the 26S proteasome and thus participates in the ATP-dependent degradation of ubiquitinated proteins. The 26S proteasome plays a key role in the maintenance of protein homeostasis by removing misfolded or damaged proteins that could impair cellular functions, and by removing proteins whose functions are no longer required. Associated with the PA200 or PA28, the 20S proteasome mediates ubiquitin-independent protein degradation. This type of proteolysis is required in several pathways including spermatogenesis (20S-PA200 complex) or generation of a subset of MHC class I-presented antigenic peptides (20S-PA28 complex). Within the 20S core complex, PSMB7 displays a trypsin-like activity. This Rattus norvegicus (Rat) protein is Proteasome subunit beta type-7 (Psmb7).